Here is a 152-residue protein sequence, read N- to C-terminus: MSESRSMVEIFSDGACSGNPGPGGFGTLLRCGERVRELSGFDPETTNNRMELLGAIAGLEALTRPCRVRLTTDSQYVCKGMTEWIHGWQKKGWKNSKKEDVANRDLWERLLVLVSKHEVSWHWVRGHAGHAENERCDELARQAIADGCSSVV.

The RNase H type-1 domain maps to 4 to 145; sequence SRSMVEIFSD…CDELARQAIA (142 aa). Residues aspartate 13, glutamate 51, aspartate 73, and aspartate 137 each contribute to the Mg(2+) site.

This sequence belongs to the RNase H family. As to quaternary structure, monomer. It depends on Mg(2+) as a cofactor.

The protein resides in the cytoplasm. It catalyses the reaction Endonucleolytic cleavage to 5'-phosphomonoester.. In terms of biological role, endonuclease that specifically degrades the RNA of RNA-DNA hybrids. The sequence is that of Ribonuclease H from Syntrophotalea carbinolica (strain DSM 2380 / NBRC 103641 / GraBd1) (Pelobacter carbinolicus).